Consider the following 102-residue polypeptide: MIVPFEHVLILAGLLFALGLVCVLVWRMNLIMLLIGIEVMLNAAMLAFVGGAARWGMADGQVFSLIIMALTSAEVSLALAMVVYLHRRKKTVDADEFRELQG.

Transmembrane regions (helical) follow at residues 5 to 25, 30 to 50, and 65 to 85; these read FEHVLILAGLLFALGLVCVLV, LIMLLIGIEVMLNAAMLAFVG, and LIIMALTSAEVSLALAMVVYL.

Belongs to the complex I subunit 4L family. As to quaternary structure, NDH-1 is composed of 14 different subunits. Subunits NuoA, H, J, K, L, M, N constitute the membrane sector of the complex.

The protein localises to the cell inner membrane. It carries out the reaction a quinone + NADH + 5 H(+)(in) = a quinol + NAD(+) + 4 H(+)(out). NDH-1 shuttles electrons from NADH, via FMN and iron-sulfur (Fe-S) centers, to quinones in the respiratory chain. The immediate electron acceptor for the enzyme in this species is believed to be ubiquinone. Couples the redox reaction to proton translocation (for every two electrons transferred, four hydrogen ions are translocated across the cytoplasmic membrane), and thus conserves the redox energy in a proton gradient. This Geobacter sulfurreducens (strain ATCC 51573 / DSM 12127 / PCA) protein is NADH-quinone oxidoreductase subunit K 2.